The sequence spans 244 residues: Phosphoadenosine 5'-phosphosulfate reductase (244 aa).

Catalysis depends on C239, which acts as the Nucleophile; cysteine thiosulfonate intermediate.

Belongs to the PAPS reductase family. CysH subfamily.

The protein resides in the cytoplasm. The catalysed reaction is [thioredoxin]-disulfide + sulfite + adenosine 3',5'-bisphosphate + 2 H(+) = [thioredoxin]-dithiol + 3'-phosphoadenylyl sulfate. It participates in sulfur metabolism; hydrogen sulfide biosynthesis; sulfite from sulfate: step 3/3. Functionally, catalyzes the formation of sulfite from phosphoadenosine 5'-phosphosulfate (PAPS) using thioredoxin as an electron donor. The chain is Phosphoadenosine 5'-phosphosulfate reductase from Photorhabdus laumondii subsp. laumondii (strain DSM 15139 / CIP 105565 / TT01) (Photorhabdus luminescens subsp. laumondii).